The sequence spans 887 residues: Transcriptional regulator DEF1 (887 aa).

Residues 1 to 13 (MERRQFNTSNIRN) are compositionally biased toward polar residues. Disordered regions lie at residues 1–117 (MERR…IQPG), 203–293 (KRSL…ESNA), 311–330 (NNETNNTGESNSTSQQPRQL), 350–542 (PVLG…QQAQ), 555–578 (NRPPSQQRQYSQTPQYNQPPPQQK), 614–675 (QAPQ…QVPK), 696–758 (QRTL…TQEQ), and 813–887 (NNAN…NLLN). Over residues 57–75 (SSSQSNSVQNQDQSEDQSQ) the composition is skewed to low complexity. Polar residues predominate over residues 76–107 (LPQQESNTQQESNTQQESNTPSPRASNTSTET). The stretch at 199–234 (EEMRKRSLENSRKRELEEAQEREESNKRQHTESSAE) forms a coiled coil. Over residues 203-231 (KRSLENSRKRELEEAQEREESNKRQHTES) the composition is skewed to basic and acidic residues. Over residues 232 to 254 (SAEPNAESSTESTTESNAESGAE) the composition is skewed to low complexity. Polar residues predominate over residues 261-270 (AESTTESNVE). Residues 311–326 (NNETNNTGESNSTSQQ) are compositionally biased toward low complexity. Residues 364–393 (KTSLTGSQNKVHSTNTQQSQKHPQQILTNS) are compositionally biased toward polar residues. Composition is skewed to low complexity over residues 399–408 (QQYSAQSQQQ), 428–456 (QQQQKQPSVPTSSVPLQVSQKQNQQQQEL), 475–519 (QQQS…QVQT), and 526–542 (QPQTQLSQQQQQQQQAQ). Over residues 622–640 (YQHHYQQVQQRQNQQPYMQ) the composition is skewed to low complexity. Residues 641-658 (SAPTYQQPHVQTPKSTRS) are compositionally biased toward polar residues. A compositionally biased stretch (basic and acidic residues) spans 696–710 (QRTLDNGREPERLRT). The span at 729–745 (RSKQSSNQKPVVKQQSS) shows a compositional bias: polar residues. Positions 829-844 (TNTRGGRASTRSSGRP) are enriched in low complexity. Positions 865-887 (TDGSQSQNSGKASKISNIRNLLN) are enriched in polar residues.

The protein resides in the nucleus. In terms of biological role, transcriptional regulator involved in extension of germ tubes into elongated hyphae and maintenance of filamentous growth. Regulates expression of UME6. Acts in a pathway that regulates maintenance of hyphal growth by repressing hyphal-to-yeast transition and allows dissemination within host epithelial tissues. Dispensable for invasion into both host oral epithelial cells and enterocytes, but required for epithelial damage. This chain is Transcriptional regulator DEF1 (DEF1), found in Candida albicans (strain SC5314 / ATCC MYA-2876) (Yeast).